A 435-amino-acid polypeptide reads, in one-letter code: Nucleoredoxin (435 aa).

Residue Ser-2 is modified to N-acetylserine. One can recognise a Thioredoxin domain in the interval 167 to 314 (PKPFREVIAG…FPWHPKPVLE (148 aa)).

This sequence belongs to the nucleoredoxin family. In terms of assembly, associates with the phosphatase 2A holoenzyme. Interacts with PPP2CA; the interaction is direct. Interacts with DVL1 (via PDZ domain); the interaction is direct and regulated by oxidative stress. In terms of tissue distribution, widely expressed with higher expression in testis and skin.

Its subcellular location is the cytoplasm. It is found in the cytosol. It localises to the nucleus. It catalyses the reaction [protein]-dithiol + NAD(+) = [protein]-disulfide + NADH + H(+). The enzyme catalyses [protein]-dithiol + NADP(+) = [protein]-disulfide + NADPH + H(+). Its function is as follows. Functions as a redox-dependent negative regulator of the Wnt signaling pathway, possibly by preventing ubiquitination of DVL3 by the BCR(KLHL12) complex. May also function as a transcriptional regulator act as a regulator of protein phosphatase 2A (PP2A). This chain is Nucleoredoxin (Nxn), found in Mus musculus (Mouse).